We begin with the raw amino-acid sequence, 431 residues long: Trigger factor (431 aa).

The PPIase FKBP-type domain maps to 158–243; sequence GDLVAVETWS…VAEVSEPVVP (86 aa).

This sequence belongs to the FKBP-type PPIase family. Tig subfamily.

The protein localises to the cytoplasm. The enzyme catalyses [protein]-peptidylproline (omega=180) = [protein]-peptidylproline (omega=0). Its function is as follows. Involved in protein export. Acts as a chaperone by maintaining the newly synthesized protein in an open conformation. Functions as a peptidyl-prolyl cis-trans isomerase. This is Trigger factor from Stenotrophomonas maltophilia (strain R551-3).